The primary structure comprises 353 residues: Uroporphyrinogen decarboxylase (353 aa).

Residues 28-32 (RQAGR), Asp78, Tyr155, Ser210, and His325 each bind substrate.

This sequence belongs to the uroporphyrinogen decarboxylase family. As to quaternary structure, homodimer.

Its subcellular location is the cytoplasm. The catalysed reaction is uroporphyrinogen III + 4 H(+) = coproporphyrinogen III + 4 CO2. It functions in the pathway porphyrin-containing compound metabolism; protoporphyrin-IX biosynthesis; coproporphyrinogen-III from 5-aminolevulinate: step 4/4. Its function is as follows. Catalyzes the decarboxylation of four acetate groups of uroporphyrinogen-III to yield coproporphyrinogen-III. The polypeptide is Uroporphyrinogen decarboxylase (Nostoc punctiforme (strain ATCC 29133 / PCC 73102)).